A 315-amino-acid chain; its full sequence is Ribosomal protein L11 methyltransferase (315 aa).

Thr164, Gly185, Asp207, and Asn250 together coordinate S-adenosyl-L-methionine.

It belongs to the methyltransferase superfamily. PrmA family.

The protein localises to the cytoplasm. The enzyme catalyses L-lysyl-[protein] + 3 S-adenosyl-L-methionine = N(6),N(6),N(6)-trimethyl-L-lysyl-[protein] + 3 S-adenosyl-L-homocysteine + 3 H(+). In terms of biological role, methylates ribosomal protein L11. In Exiguobacterium sibiricum (strain DSM 17290 / CCUG 55495 / CIP 109462 / JCM 13490 / 255-15), this protein is Ribosomal protein L11 methyltransferase.